We begin with the raw amino-acid sequence, 620 residues long: Endoglucanase 6 (620 aa).

An N-terminal signal peptide occupies residues 1–22; that stretch reads MEKFAPVAALLLLLLCFPVAFS. The active-site Nucleophile is the Asp-78. Catalysis depends on residues His-411, Asp-463, and Glu-472. Residues Asn-554 and Asn-564 are each glycosylated (N-linked (GlcNAc...) asparagine).

Belongs to the glycosyl hydrolase 9 (cellulase E) family.

It is found in the secreted. It carries out the reaction Endohydrolysis of (1-&gt;4)-beta-D-glucosidic linkages in cellulose, lichenin and cereal beta-D-glucans.. This is Endoglucanase 6 from Arabidopsis thaliana (Mouse-ear cress).